Here is a 66-residue protein sequence, read N- to C-terminus: Large ribosomal subunit protein bL31 (66 aa).

The Zn(2+) site is built by Cys-16, Cys-18, Cys-36, and Cys-39.

The protein belongs to the bacterial ribosomal protein bL31 family. Type A subfamily. As to quaternary structure, part of the 50S ribosomal subunit. It depends on Zn(2+) as a cofactor.

In terms of biological role, binds the 23S rRNA. The protein is Large ribosomal subunit protein bL31 of Moorella thermoacetica (strain ATCC 39073 / JCM 9320).